We begin with the raw amino-acid sequence, 37 residues long: Large ribosomal subunit protein bL36 (37 aa).

Belongs to the bacterial ribosomal protein bL36 family.

This chain is Large ribosomal subunit protein bL36, found in Aromatoleum aromaticum (strain DSM 19018 / LMG 30748 / EbN1) (Azoarcus sp. (strain EbN1)).